Consider the following 340-residue polypeptide: Ribonucleoside-diphosphate reductase small subunit (340 aa).

A helical membrane pass occupies residues 180-200; the sequence is FILMILIEGIFFAASFAAIAY.

It belongs to the ribonucleoside diphosphate reductase small chain family. In terms of assembly, heterotetramer composed of a homodimer of the large subunit (R1) and a homodimer of the small subunit (R2). Larger multisubunit protein complex are also active, composed of (R1)n(R2)n. Fe cation serves as cofactor.

Its subcellular location is the host membrane. The catalysed reaction is a 2'-deoxyribonucleoside 5'-diphosphate + [thioredoxin]-disulfide + H2O = a ribonucleoside 5'-diphosphate + [thioredoxin]-dithiol. In terms of biological role, ribonucleoside-diphosphate reductase holoenzyme provides the precursors necessary for viral DNA synthesis. Allows virus growth in non-dividing cells, as well as reactivation from latency in infected hosts. Catalyzes the biosynthesis of deoxyribonucleotides from the corresponding ribonucleotides. This chain is Ribonucleoside-diphosphate reductase small subunit, found in Human herpesvirus 1 (strain 17) (HHV-1).